Reading from the N-terminus, the 395-residue chain is Probable inactive serine/threonine-protein kinase DDB_G0293746 (395 aa).

One can recognise a Protein kinase domain in the interval 9-395; it reads YSEIDLISDN…ITQFIIDYLF (387 aa). ATP is bound by residues 15–23 and Lys-54; that span reads ISDNPFKNY. Residues 213-266 form a disordered region; that stretch reads NSSLSSLSSSTSSSSSSSSSTNCNNNTTENNNNNYNNNNNNNNNNNNNNNNNSL.

This sequence belongs to the protein kinase superfamily. Ser/Thr protein kinase family.

This chain is Probable inactive serine/threonine-protein kinase DDB_G0293746, found in Dictyostelium discoideum (Social amoeba).